The sequence spans 444 residues: Exodeoxyribonuclease 7 large subunit (444 aa).

This sequence belongs to the XseA family. As to quaternary structure, heterooligomer composed of large and small subunits.

It is found in the cytoplasm. The catalysed reaction is Exonucleolytic cleavage in either 5'- to 3'- or 3'- to 5'-direction to yield nucleoside 5'-phosphates.. Functionally, bidirectionally degrades single-stranded DNA into large acid-insoluble oligonucleotides, which are then degraded further into small acid-soluble oligonucleotides. The polypeptide is Exodeoxyribonuclease 7 large subunit (Pseudoalteromonas translucida (strain TAC 125)).